Reading from the N-terminus, the 138-residue chain is Large ribosomal subunit protein uL16 (138 aa).

The protein belongs to the universal ribosomal protein uL16 family. In terms of assembly, part of the 50S ribosomal subunit.

Its function is as follows. Binds 23S rRNA and is also seen to make contacts with the A and possibly P site tRNAs. The chain is Large ribosomal subunit protein uL16 from Gluconacetobacter diazotrophicus (strain ATCC 49037 / DSM 5601 / CCUG 37298 / CIP 103539 / LMG 7603 / PAl5).